The sequence spans 504 residues: Maturase K (504 aa).

This sequence belongs to the intron maturase 2 family. MatK subfamily.

It localises to the plastid. The protein localises to the chloroplast. Functionally, usually encoded in the trnK tRNA gene intron. Probably assists in splicing its own and other chloroplast group II introns. This chain is Maturase K, found in Adansonia digitata (Baobab tree).